Reading from the N-terminus, the 667-residue chain is tRNA 5-methylaminomethyl-2-thiouridine biosynthesis bifunctional protein MnmC (667 aa).

The segment at 1-241 is tRNA (mnm(5)s(2)U34)-methyltransferase; it reads MHKLTFAQLS…KREMLCGEKA (241 aa). Positions 268 to 667 are FAD-dependent cmnm(5)s(2)U34 oxidoreductase; that stretch reads VGGGIASLFV…RKWLKGSKVV (400 aa).

In the N-terminal section; belongs to the methyltransferase superfamily. tRNA (mnm(5)s(2)U34)-methyltransferase family. This sequence in the C-terminal section; belongs to the DAO family. It depends on FAD as a cofactor.

It localises to the cytoplasm. It carries out the reaction 5-aminomethyl-2-thiouridine(34) in tRNA + S-adenosyl-L-methionine = 5-methylaminomethyl-2-thiouridine(34) in tRNA + S-adenosyl-L-homocysteine + H(+). Its function is as follows. Catalyzes the last two steps in the biosynthesis of 5-methylaminomethyl-2-thiouridine (mnm(5)s(2)U) at the wobble position (U34) in tRNA. Catalyzes the FAD-dependent demodification of cmnm(5)s(2)U34 to nm(5)s(2)U34, followed by the transfer of a methyl group from S-adenosyl-L-methionine to nm(5)s(2)U34, to form mnm(5)s(2)U34. In Haemophilus ducreyi (strain 35000HP / ATCC 700724), this protein is tRNA 5-methylaminomethyl-2-thiouridine biosynthesis bifunctional protein MnmC.